The chain runs to 432 residues: Monoacylglycerol lipase ABHD2 (432 aa).

At 1-14 (MNTHESEVYTVAPE) the chain is on the cytoplasmic side. Residues 15 to 35 (MPAMFDGMKLAAVATVLYVIV) form a helical; Signal-anchor for type II membrane protein membrane-spanning segment. Topologically, residues 36 to 432 (RCLNLKSPTA…NQTTCQENTS (397 aa)) are extracellular. One can recognise an AB hydrolase-1 domain in the interval 132–383 (TMVICPGIGN…HGGHLGFFEG (252 aa)). The N-linked (GlcNAc...) asparagine glycan is linked to Asn-141. Catalysis depends on Ser-212, which acts as the Nucleophile. Asn-225 is a glycosylation site (N-linked (GlcNAc...) asparagine). Residues Asp-346 and His-377 each act as charge relay system in the active site. The tract at residues 413–432 (PPCQSKDAQSNQTTCQENTS) is disordered. Residues 418 to 432 (KDAQSNQTTCQENTS) are compositionally biased toward polar residues. An N-linked (GlcNAc...) asparagine glycan is attached at Asn-423.

Belongs to the AB hydrolase superfamily. AB hydrolase 4 family.

It localises to the cell membrane. The catalysed reaction is Hydrolyzes glycerol monoesters of long-chain fatty acids.. It carries out the reaction an acetyl ester + H2O = an aliphatic alcohol + acetate + H(+). The enzyme catalyses a triacylglycerol + H2O = a diacylglycerol + a fatty acid + H(+). It catalyses the reaction 2-(5Z,8Z,11Z,14Z-eicosatetraenoyl)-glycerol + H2O = glycerol + (5Z,8Z,11Z,14Z)-eicosatetraenoate + H(+). The catalysed reaction is a butanoate ester + H2O = an aliphatic alcohol + butanoate + H(+). It carries out the reaction hexadecanoate ester + H2O = an aliphatic alcohol + hexadecanoate + H(+). Its activity is regulated as follows. Acylglycerol lipase activity is activated upon binding to progesterone. Its function is as follows. Progesterone-dependent acylglycerol lipase that catalyzes hydrolysis of endocannabinoid arachidonoylglycerol (AG) from cell membrane. Acts as a progesterone receptor: progesterone-binding activates the acylglycerol lipase activity, mediating degradation of 1-arachidonoylglycerol (1AG) and 2-arachidonoylglycerol (2AG) to glycerol and arachidonic acid (AA). Also displays an ester hydrolase activity against acetyl ester, butanoate ester and hexadecanoate ester. Plays a key role in sperm capacitation in response to progesterone by mediating degradation of 2AG, an inhibitor of the sperm calcium channel CatSper, leading to calcium influx via CatSper and sperm activation. May also play a role in smooth muscle cells migration. In Danio rerio (Zebrafish), this protein is Monoacylglycerol lipase ABHD2 (abhd2a).